The following is a 216-amino-acid chain: MTDTIDPDLIERGRKMFAGDWHFIWASPSIETLPPMGSVEIAFAGRSNVGKSSLINALTGRNALARTSHTPGRTQELIFFEGPPNAGLRLVDMPGYGYAAASKAKVASWTSLIHHFLQGRATLARVYVLIDGRHGLKDVDLDILKTLDKAAVSYQIVLTKADQVKAAELAERVTATVAALAKHPAAFPEVLTTSSRTGAGMPELRAAMIRLLDERR.

The 178-residue stretch at 37-214 (GSVEIAFAGR…RAAMIRLLDE (178 aa)) folds into the EngB-type G domain. GTP contacts are provided by residues 45–52 (GRSNVGKS), 72–76 (GRTQE), 92–95 (DMPG), 159–162 (TKAD), and 193–195 (TSS). Residues S52 and T74 each contribute to the Mg(2+) site.

This sequence belongs to the TRAFAC class TrmE-Era-EngA-EngB-Septin-like GTPase superfamily. EngB GTPase family. Mg(2+) serves as cofactor.

In terms of biological role, necessary for normal cell division and for the maintenance of normal septation. This chain is Probable GTP-binding protein EngB, found in Rhodopseudomonas palustris (strain TIE-1).